Reading from the N-terminus, the 400-residue chain is MSKTHDVIELTEKFGAHNYHPLPIVISEAKGIWVTDPEGNRYMDMLSAYSAVNQGHCHPKIIQALKDQADKITLTSRAFYNDQLGRFYDKVVTLTKKQMVLPMNTGAEAVETAVKTARRWAYDVKGIPGQAEIIVCSGNFHGRTMAAVSMSTEAEYQRGFGPLLPGFKVVPYGDIDAFEAAITENTAAFIVEPIQGEAGIIIPPAGYLKRASELCKEHNVLFVADEIQSGLGRSGKWFAIEWEDVTPDMYILGKALGGGVFPISCVAADQEILSVFNPGSHGSTFGGNPLASAVSVAALEVLEEENLPERSLELGTYFMDRLKSIDNPMIRDVRGRGLFIGIELTESARPYCEALKERGLLCKETHETVIRLAPPLVITKEELDQAFEAIEAVLAPAAIS.

Position 254 is an N6-(pyridoxal phosphate)lysine (Lys-254).

The protein belongs to the class-III pyridoxal-phosphate-dependent aminotransferase family. OAT subfamily. The cofactor is pyridoxal 5'-phosphate.

The protein resides in the cytoplasm. It carries out the reaction a 2-oxocarboxylate + L-ornithine = L-glutamate 5-semialdehyde + an L-alpha-amino acid. It functions in the pathway amino-acid biosynthesis; L-proline biosynthesis; L-glutamate 5-semialdehyde from L-ornithine: step 1/1. Its function is as follows. Catalyzes the interconversion of ornithine to glutamate semialdehyde. The polypeptide is Ornithine aminotransferase (Exiguobacterium sp. (strain ATCC BAA-1283 / AT1b)).